Consider the following 132-residue polypeptide: Myelin P2 protein (132 aa).

Ser2 carries the N-acetylserine modification. Residues Arg107 and 127–129 each bind (9Z)-octadecenoate; that span reads RIY. Hexadecanoate is bound by residues Arg107 and 127–129; that span reads RIY.

It belongs to the calycin superfamily. Fatty-acid binding protein (FABP) family. In terms of assembly, monomer.

The protein resides in the cytoplasm. Functionally, may play a role in lipid transport protein in Schwann cells. May bind cholesterol. The chain is Myelin P2 protein (PMP2) from Oryctolagus cuniculus (Rabbit).